The sequence spans 547 residues: Chaperonin GroEL (547 aa).

Residues 30–33 (TLGP), K51, 87–91 (DGTTT), G415, 479–481 (NAA), and D495 contribute to the ATP site.

This sequence belongs to the chaperonin (HSP60) family. In terms of assembly, forms a cylinder of 14 subunits composed of two heptameric rings stacked back-to-back. Interacts with the co-chaperonin GroES.

Its subcellular location is the cytoplasm. The enzyme catalyses ATP + H2O + a folded polypeptide = ADP + phosphate + an unfolded polypeptide.. Functionally, together with its co-chaperonin GroES, plays an essential role in assisting protein folding. The GroEL-GroES system forms a nano-cage that allows encapsulation of the non-native substrate proteins and provides a physical environment optimized to promote and accelerate protein folding. The protein is Chaperonin GroEL of Pseudomonas syringae pv. tomato (strain ATCC BAA-871 / DC3000).